The chain runs to 528 residues: ADP,ATP carrier protein 1 (528 aa).

The next 12 membrane-spanning stretches (helical) occupy residues 24-44 (LKKV…YTIL), 63-83 (IPFI…LIYA), 93-113 (ALFF…PVVI), 124-144 (AFAD…IAML), 149-169 (FAVF…LMFW), 184-204 (FYAL…PAII), 220-240 (WGVS…IIAA), 284-304 (YMLL…LVEV), 327-347 (FSFW…GNVI), 356-376 (ALVT…LVIF), 381-401 (TGLV…VGAI), and 463-483 (IGAM…VWLT).

Belongs to the ADP/ATP translocase tlc family.

The protein localises to the cell membrane. In Chlamydia trachomatis serovar D (strain ATCC VR-885 / DSM 19411 / UW-3/Cx), this protein is ADP,ATP carrier protein 1 (tlcA).